The chain runs to 365 residues: Glycerol dehydrogenase (365 aa).

D37, G94, K95, T116, and S119 together coordinate NAD(+). Glycerol is bound at residue D121. NAD(+)-binding residues include S125, L127, and Y131. Positions 171, 254, and 271 each coordinate Mn(2+). H254 contacts glycerol.

It belongs to the iron-containing alcohol dehydrogenase family. Homohexamer. The cofactor is Mn(2+).

The enzyme catalyses glycerol + NAD(+) = dihydroxyacetone + NADH + H(+). It carries out the reaction hydroxyacetone + NADH + H(+) = (S)-propane-1,2-diol + NAD(+). Its pathway is polyol metabolism; glycerol fermentation; glycerone phosphate from glycerol (oxidative route): step 1/2. With respect to regulation, inhibited by zinc. In terms of biological role, catalyzes the NAD-dependent oxidation of glycerol to dihydroxyacetone (glycerone). Allows microorganisms to utilize glycerol as a source of carbon under anaerobic conditions. Exhibits a rather broad substrate specificity since it can also oxidize 1,2-propanediol and 2,3-butanediol and reduce dihydroxyacetone. Cannot use NADP(+) as an electron acceptor for the oxidation of glycerol. This chain is Glycerol dehydrogenase, found in Citrobacter freundii.